The sequence spans 865 residues: Alanine--tRNA ligase (865 aa).

The Zn(2+) site is built by His-556, His-560, Cys-660, and His-664.

This sequence belongs to the class-II aminoacyl-tRNA synthetase family. It depends on Zn(2+) as a cofactor.

The protein localises to the cytoplasm. The enzyme catalyses tRNA(Ala) + L-alanine + ATP = L-alanyl-tRNA(Ala) + AMP + diphosphate. Catalyzes the attachment of alanine to tRNA(Ala) in a two-step reaction: alanine is first activated by ATP to form Ala-AMP and then transferred to the acceptor end of tRNA(Ala). Also edits incorrectly charged Ser-tRNA(Ala) and Gly-tRNA(Ala) via its editing domain. The protein is Alanine--tRNA ligase of Ruthia magnifica subsp. Calyptogena magnifica.